The sequence spans 189 residues: Peptidyl-tRNA hydrolase (189 aa).

TRNA is bound at residue Tyr-16. His-21 serves as the catalytic Proton acceptor. Positions 67, 69, and 115 each coordinate tRNA.

This sequence belongs to the PTH family. Monomer.

The protein localises to the cytoplasm. It catalyses the reaction an N-acyl-L-alpha-aminoacyl-tRNA + H2O = an N-acyl-L-amino acid + a tRNA + H(+). Its function is as follows. Hydrolyzes ribosome-free peptidyl-tRNAs (with 1 or more amino acids incorporated), which drop off the ribosome during protein synthesis, or as a result of ribosome stalling. Functionally, catalyzes the release of premature peptidyl moieties from peptidyl-tRNA molecules trapped in stalled 50S ribosomal subunits, and thus maintains levels of free tRNAs and 50S ribosomes. This is Peptidyl-tRNA hydrolase from Legionella pneumophila (strain Lens).